The following is a 330-amino-acid chain: Free fatty acid receptor 2 (330 aa).

The Extracellular portion of the chain corresponds to 1 to 8 (MTPDWHSS). A helical transmembrane segment spans residues 9–29 (LILTAYILIFLTGLPANLLAL). At 30–43 (RAFMGRVRQPQPAP) the chain is on the cytoplasmic side. Residues 44–64 (VHILLLNLTLADLLLLLLLPF) form a helical membrane-spanning segment. The Extracellular portion of the chain corresponds to 65 to 79 (RIVEAASNFRWYLPK). A helical transmembrane segment spans residues 80–100 (IVCALTGFGFYSSIYCSTWLL). Residues 101 to 126 (AGISMERYLGVAFPVQYKLSRRPLYG) lie on the Cytoplasmic side of the membrane. A helical transmembrane segment spans residues 127 to 147 (VIAALVAWIMSFGHCTIVIIV). Over 148-184 (QYLNSTEQVGTENQITCYENFTQEQLDVVLPVRLELC) the chain is Extracellular. N-linked (GlcNAc...) asparagine glycans are attached at residues Asn151 and Asn167. Residues 185 to 205 (LVLFFVPMAVTIFCYWRFVWI) form a helical membrane-spanning segment. Residues 206 to 219 (MLTQPHVGAQRRRR) lie on the Cytoplasmic side of the membrane. Residues 220–240 (AVGLAVVTLLNFLVCFGPYNM) traverse the membrane as a helical segment. The Extracellular segment spans residues 241–255 (SHLVGFYLRQSPSWR). A helical membrane pass occupies residues 256–276 (VEAVVFSSLNASLDPLLFYFS). At 277-330 (SSVVRRAFGKGLLLIRNPASSMLGRGAKETVEGTKMDRGGSQAEGVQSSEFVTE) the chain is on the cytoplasmic side. The segment at 306-330 (TVEGTKMDRGGSQAEGVQSSEFVTE) is disordered. Over residues 320–330 (EGVQSSEFVTE) the composition is skewed to polar residues.

This sequence belongs to the G-protein coupled receptor 1 family. In terms of assembly, interacts with FCN1 (via Fibrinogen C-terminal domain). As to expression, highly expressed in hematopoietic tissues, such as spleen and bone marrow, with highest levels in a subset of immune cells, including monocytes or neutrophils. Expressed in adipose tissues with high expression in differentiating adipocytes. Expressed by intestinal endocrine cells.

It is found in the cell membrane. In terms of biological role, g protein-coupled receptor that is activated by a major product of dietary fiber digestion, the short chain fatty acids (SCFAs), and that plays a role in the regulation of whole-body energy homeostasis and in intestinal immunity. In omnivorous mammals, the short chain fatty acids acetate, propionate and butyrate are produced primarily by the gut microbiome that metabolizes dietary fibers. SCFAs serve as a source of energy but also act as signaling molecules. That G protein-coupled receptor is probably coupled to the pertussis toxin-sensitive, G(i/o)-alpha family of G proteins but also to the Gq family. Its activation results in the formation of inositol 1,4,5-trisphosphate, the mobilization of intracellular calcium, the phosphorylation of the MAPK3/ERK1 and MAPK1/ERK2 kinases and the inhibition of intracellular cAMP accumulation. May play a role in glucose homeostasis by regulating the secretion of GLP-1, in response to short-chain fatty acids accumulating in the intestine. May also regulate the production of LEP/Leptin, a hormone acting on the central nervous system to inhibit food intake. Finally, may also regulate whole-body energy homeostasis through adipogenesis regulating both differentiation and lipid storage of adipocytes. In parallel to its role in energy homeostasis, may also mediate the activation of the inflammatory and immune responses by SCFA in the intestine, regulating the rapid production of chemokines and cytokines. May also play a role in the resolution of the inflammatory response and control chemotaxis in neutrophils. In addition to SCFAs, may also be activated by the extracellular lectin FCN1 in a process leading to activation of monocytes and inducing the secretion of interleukin-8/IL-8 in response to the presence of microbes. This is Free fatty acid receptor 2 (Ffar2) from Mus musculus (Mouse).